Consider the following 897-residue polypeptide: MERAGATSRGGQAPGFLLRLHTEGRAEAARVQEQDLRQWGLTGIHLRSYQLEGVNWLAQRFHCQNGCILGDEMGLGKTCQTIALFIYLAGRLNDEGPFLILCPLSVLSNWKEEMQRFAPGLSCVTYAGDKEERACLQQDLKQESRFHVLLTTYEICLKDASFLKSFPWSVLVVDEAHRLKNQSSLLHKTLSEFSVVFSLLLTGTPIQNSLQELYSLLSFVEPDLFSKEEVGDFIQRYQDIEKESESASELHKLLQPFLLRRVKAEVATELPKKTEVVIYHGMSALQKKYYKAILMKDLDAFENETAKKVKLQNILSQLRKCVDHPYLFDGVEPEPFEVGDHLTEASGKLHLLDKLLAFLYSGGHRVLLFSQMTQMLDILQDYMDYRGYSYERVDGSVRGEERHLAIKNFGQQPIFVFLLSTRAGGVGMNLTAADTVIFVDSDFNPQNDLQAAARAHRIGQNKSVKVIRLIGRDTVEEIVYRKAASKLQLTNMIIEGGHFTLGAQKPAADADLQLSEILKFGLDKLLASEGSTMDEIDLESILGETKDGQWVSDALPAAEGGSRDQEEGKNHMYLFEGKDYSKEPSKEDRKSFEQLVNLQKTLLEKASQEGRSLRNKGSVLIPGLVEGSTKRKRVLSPEELEDRQKKRQEAAAKRRRLIEEKKRQKEEAEHKKKMAWWESNNYQSFCLPSEESEPEDLENGEESSAELDYQDPDATSLKYVSGDVTHPQAGAEDALIVHCVDDSGHWGRGGLFTALEKRSAEPRKIYELAGKMKDLSLGGVLLFPVDDKESRNKGQDLLALIVAQHRDRSNVLSGIKMAALEEGLKKIFLAAKKKKASVHLPRIGHATKGFNWYGTERLIRKHLAARGIPTYIYYFPRSKSAVLHSQSSSSSSRQLVP.

An Omega-N-methylarginine modification is found at Arg9. The 166-residue stretch at 58–223 (AQRFHCQNGC…YSLLSFVEPD (166 aa)) folds into the Helicase ATP-binding domain. 71–78 (DEMGLGKT) provides a ligand contact to ATP. A DEAH box motif is present at residues 174 to 177 (DEAH). The Helicase C-terminal domain occupies 351 to 513 (LLDKLLAFLY…QKPAADADLQ (163 aa)). 5 positions are modified to phosphoserine: Ser540, Ser607, Ser618, Ser628, and Ser636. Positions 601-635 (TLLEKASQEGRSLRNKGSVLIPGLVEGSTKRKRVL) are regulatory linker segment (RLS). Residues 615 to 673 (NKGSVLIPGLVEGSTKRKRVLSPEELEDRQKKRQEAAAKRRRLIEEKKRQKEEAEHKKK) form a required for ATPase activity region. Disordered stretches follow at residues 628–654 (STKR…AAKR) and 687–711 (LPSE…DYQD). Residues 638-675 (EELEDRQKKRQEAAAKRRRLIEEKKRQKEEAEHKKKMA) adopt a coiled-coil conformation. Positions 642-654 (DRQKKRQEAAAKR) are enriched in basic and acidic residues. Residues 690-711 (EESEPEDLENGEESSAELDYQD) are compositionally biased toward acidic residues. The region spanning 704–897 (SAELDYQDPD…SSSSSRQLVP (194 aa)) is the Macro domain. At Ser891 the chain carries Phosphoserine.

It belongs to the SNF2/RAD54 helicase family. As to quaternary structure, interacts with nucleosomes; interacts with the acidic patch of histones. Interacts (via macro domain) with PARP1; interacts only when PARP1 is poly-ADP-ribosylated (PARylated). Interacts with CIAO1. In terms of tissue distribution, frequently overexpressed in hepatomacellular carcinomas.

It is found in the nucleus. The protein resides in the chromosome. It carries out the reaction ATP + H2O = ADP + phosphate + H(+). With respect to regulation, adopts an inactive conformation in absence of DNA damage. Binding to poly-ADP-ribosylated histones activates the ATP-dependent chromatin remodeler activity. In terms of biological role, ATP-dependent chromatin remodeler that mediates chromatin-remodeling following DNA damage. Recruited to DNA damage sites through interaction with poly-ADP-ribose: specifically recognizes and binds histones that are poly-ADP-ribosylated on serine residues in response to DNA damage. Poly-ADP-ribose-binding activates the ATP-dependent chromatin remodeler activity, thereby regulating chromatin during DNA repair. Catalyzes nucleosome sliding away from DNA breaks in an ATP-dependent manner. Chromatin remodeling activity promotes PARP2 removal from chromatin. The polypeptide is Chromodomain-helicase-DNA-binding protein 1-like (Homo sapiens (Human)).